We begin with the raw amino-acid sequence, 142 residues long: Profilin (142 aa).

This sequence belongs to the profilin family. Occurs in many kinds of cells as a complex with monomeric actin in a 1:1 ratio. As to expression, expressed specifically in coelomocytes in response to injury.

The protein localises to the cytoplasm. It is found in the cytoskeleton. In terms of biological role, binds to actin and affects the structure of the cytoskeleton. At high concentrations, profilin prevents the polymerization of actin, whereas it enhances it at low concentrations. By binding to PIP2, it inhibits the formation of IP3 and DG. The chain is Profilin from Strongylocentrotus purpuratus (Purple sea urchin).